Reading from the N-terminus, the 694-residue chain is Elongation factor G (694 aa).

The 283-residue stretch at 6–288 (KLYRNIGIAA…GVIEYLPSPT (283 aa)) folds into the tr-type G domain. GTP-binding positions include 15-22 (AHVDAGKT), 86-90 (DTPGH), and 140-143 (NKMD).

The protein belongs to the TRAFAC class translation factor GTPase superfamily. Classic translation factor GTPase family. EF-G/EF-2 subfamily.

It is found in the cytoplasm. Catalyzes the GTP-dependent ribosomal translocation step during translation elongation. During this step, the ribosome changes from the pre-translocational (PRE) to the post-translocational (POST) state as the newly formed A-site-bound peptidyl-tRNA and P-site-bound deacylated tRNA move to the P and E sites, respectively. Catalyzes the coordinated movement of the two tRNA molecules, the mRNA and conformational changes in the ribosome. The protein is Elongation factor G of Legionella pneumophila subsp. pneumophila (strain Philadelphia 1 / ATCC 33152 / DSM 7513).